Here is a 570-residue protein sequence, read N- to C-terminus: Urease subunit alpha (570 aa).

Positions glycine 135–leucine 570 constitute a Urease domain. Histidine 140, histidine 142, and lysine 219 together coordinate Ni(2+). At lysine 219 the chain carries N6-carboxylysine. Histidine 221 provides a ligand contact to substrate. Residues histidine 248 and histidine 274 each contribute to the Ni(2+) site. Catalysis depends on histidine 322, which acts as the Proton donor. Aspartate 362 lines the Ni(2+) pocket.

This sequence belongs to the metallo-dependent hydrolases superfamily. Urease alpha subunit family. Heterotrimer of UreA (gamma), UreB (beta) and UreC (alpha) subunits. Three heterotrimers associate to form the active enzyme. Requires Ni cation as cofactor. Post-translationally, carboxylation allows a single lysine to coordinate two nickel ions.

It localises to the cytoplasm. The enzyme catalyses urea + 2 H2O + H(+) = hydrogencarbonate + 2 NH4(+). Its pathway is nitrogen metabolism; urea degradation; CO(2) and NH(3) from urea (urease route): step 1/1. This is Urease subunit alpha from Haloquadratum walsbyi (strain DSM 16790 / HBSQ001).